We begin with the raw amino-acid sequence, 247 residues long: Trypsin (247 aa).

Residues 1 to 21 (LTTVISYFALVAFALVGVSYA) form the signal peptide. Positions 22–30 (TPKASINGR) are cleaved as a propeptide — activation peptide. The region spanning 31 to 247 (IVGGEMTDIS…QSNFPGVYGI (217 aa)) is the Peptidase S1 domain. The cysteines at positions 61 and 77 are disulfide-linked. Residues histidine 76 and aspartate 120 each act as charge relay system in the active site. 2 cysteine pairs are disulfide-bonded: cysteine 185/cysteine 201 and cysteine 212/cysteine 236. Serine 216 (charge relay system) is an active-site residue.

This sequence belongs to the peptidase S1 family. In terms of tissue distribution, midgut.

Its subcellular location is the secreted. The protein resides in the extracellular space. The enzyme catalyses Preferential cleavage: Arg-|-Xaa, Lys-|-Xaa.. This Simulium vittatum (Striped black fly) protein is Trypsin.